The sequence spans 636 residues: Chaperone protein HtpG (636 aa).

Positions 1–329 (MSKEHGAAAE…TEDLPLNISR (329 aa)) are a; substrate-binding. A b region spans residues 330-550 (ETLQENALIA…DGGMTASMEK (221 aa)). The tract at residues 551 to 636 (LMRVMNKDES…TGWYAEVRKL (86 aa)) is c.

Belongs to the heat shock protein 90 family. As to quaternary structure, homodimer.

It localises to the cytoplasm. Its function is as follows. Molecular chaperone. Has ATPase activity. The sequence is that of Chaperone protein HtpG from Oleidesulfovibrio alaskensis (strain ATCC BAA-1058 / DSM 17464 / G20) (Desulfovibrio alaskensis).